A 140-amino-acid polypeptide reads, in one-letter code: Chorion class A protein Ld2/Ld41 (140 aa).

The N-terminal stretch at 1–21 (MNSFAFLLVCIQACLVQSVFS) is a signal peptide.

This sequence belongs to the chorion protein family.

In terms of biological role, this protein is one of many from the eggshell of the gypsy moth. The sequence is that of Chorion class A protein Ld2/Ld41 from Lymantria dispar (Gypsy moth).